The sequence spans 236 residues: LexA repressor (236 aa).

The segment at residues 26-46 (FDEMKDALDLRSKSGIHRLIT) is a DNA-binding region (H-T-H motif). The segment at 85–109 (PSVIEGNLGKVRPPSPTPAEDDHDR) is disordered. Residues serine 157 and lysine 195 each act as for autocatalytic cleavage activity in the active site.

Belongs to the peptidase S24 family. In terms of assembly, homodimer.

The catalysed reaction is Hydrolysis of Ala-|-Gly bond in repressor LexA.. Represses a number of genes involved in the response to DNA damage (SOS response), including recA and lexA. In the presence of single-stranded DNA, RecA interacts with LexA causing an autocatalytic cleavage which disrupts the DNA-binding part of LexA, leading to derepression of the SOS regulon and eventually DNA repair. In Rhodopseudomonas palustris (strain ATCC BAA-98 / CGA009), this protein is LexA repressor.